Reading from the N-terminus, the 324-residue chain is 3-hydroxyisobutyrate dehydrogenase, mitochondrial (324 aa).

Residues 1-25 (MSLRVMSPAMLNAWSQTLVRAMSTQ) constitute a mitochondrion transit peptide. NAD(+) contacts are provided by residues 29–58 (KNIG…HVFD), 92–93 (LP), and Thr-121. Lys-196 is a catalytic residue. Lys-271 serves as a coordination point for NAD(+).

Belongs to the HIBADH-related family. 3-hydroxyisobutyrate dehydrogenase subfamily.

Its subcellular location is the mitochondrion. It catalyses the reaction 3-hydroxy-2-methylpropanoate + NAD(+) = 2-methyl-3-oxopropanoate + NADH + H(+). It functions in the pathway amino-acid degradation; L-valine degradation. The polypeptide is 3-hydroxyisobutyrate dehydrogenase, mitochondrial (Drosophila melanogaster (Fruit fly)).